The chain runs to 166 residues: Emerin homolog 1 (166 aa).

Positions 1–44 (MDVSQLTDAELRDSLKSHGVSVGPIVATTRKLYEKKLIKLSDGS) constitute an LEM domain. Topologically, residues 1–127 (MDVSQLTDAE…QAQSNKGGFL (127 aa)) are nuclear. Residues 62-99 (IISSSPKKSPPQRVFQNVSAATAAATTSPESDSDDCEE) are disordered. The helical transmembrane segment at 128 to 148 (GSTITFTILFVFIAVFAYFLI) threads the bilayer. Residues 149-166 (ENAEQLKLVAETNPEDTI) are Perinuclear space-facing.

In terms of assembly, interacts with lmn-1 and baf-1. As to expression, ubiquitous. Expressed in all cells, except in cells undergoing spermatogenesis. High expression in hypodermis, neurons, pharyngeal muscle, body wall muscle and gonadal sheath.

It is found in the nucleus inner membrane. Its subcellular location is the nucleus envelope. Nuclear lamina-associated inner nuclear membrane protein that is involved in cell division, nuclear structure organization, maintenance of nuclear envelope integrity and nuclear envelope reformation after mitosis. Involved in chromosome segregation and cell division, probably via its interaction with the nuclear intermediate filament protein lmn-1, the main component of nuclear lamina. Required to organize the distribution of lmn-1, nuclear pore complexes (NPCs) and chromatin in mitotically active cells. Together with lem-2, plays a role in baf-1 enrichment at the nuclear envelope in anaphase. Together with lem-2, involved in muscle cell attachment to hypodermal cells, as well as muscle cell location and sarcomere organization. May play a role in radiation-induced DNA damage repair response. May repress binding of transcription factor pha-4 with target sequences in pharyngeal cells. The chain is Emerin homolog 1 (emr-1) from Caenorhabditis elegans.